Consider the following 486-residue polypeptide: Membrane-bound lytic murein transglycosylase F (486 aa).

The first 21 residues, 1–21 (MTRIKLSYFTIGLVALLLALA), serve as a signal peptide directing secretion. The segment at 22 to 268 (LWPNIPWRNG…RLEEKYLGHV (247 aa)) is non-LT domain. The LT domain stretch occupies residues 269–486 (GSFDYVDTKT…VVGPGWSIGD (218 aa)). Glu-313 is a catalytic residue.

In the N-terminal section; belongs to the bacterial solute-binding protein 3 family. This sequence in the C-terminal section; belongs to the transglycosylase Slt family.

It localises to the cell outer membrane. The catalysed reaction is Exolytic cleavage of the (1-&gt;4)-beta-glycosidic linkage between N-acetylmuramic acid (MurNAc) and N-acetylglucosamine (GlcNAc) residues in peptidoglycan, from either the reducing or the non-reducing ends of the peptidoglycan chains, with concomitant formation of a 1,6-anhydrobond in the MurNAc residue.. In terms of biological role, murein-degrading enzyme that degrades murein glycan strands and insoluble, high-molecular weight murein sacculi, with the concomitant formation of a 1,6-anhydromuramoyl product. Lytic transglycosylases (LTs) play an integral role in the metabolism of the peptidoglycan (PG) sacculus. Their lytic action creates space within the PG sacculus to allow for its expansion as well as for the insertion of various structures such as secretion systems and flagella. The sequence is that of Membrane-bound lytic murein transglycosylase F from Yersinia pestis bv. Antiqua (strain Antiqua).